A 427-amino-acid chain; its full sequence is UDP-N-acetylglucosamine 1-carboxyvinyltransferase 1 (427 aa).

23–24 (KN) contributes to the phosphoenolpyruvate binding site. Position 96 (R96) interacts with UDP-N-acetyl-alpha-D-glucosamine. The Proton donor role is filled by C120. C120 carries the post-translational modification 2-(S-cysteinyl)pyruvic acid O-phosphothioketal. Residues 125 to 129 (RPIDL), D309, and V331 each bind UDP-N-acetyl-alpha-D-glucosamine.

The protein belongs to the EPSP synthase family. MurA subfamily.

It localises to the cytoplasm. The catalysed reaction is phosphoenolpyruvate + UDP-N-acetyl-alpha-D-glucosamine = UDP-N-acetyl-3-O-(1-carboxyvinyl)-alpha-D-glucosamine + phosphate. It functions in the pathway cell wall biogenesis; peptidoglycan biosynthesis. Cell wall formation. Adds enolpyruvyl to UDP-N-acetylglucosamine. The polypeptide is UDP-N-acetylglucosamine 1-carboxyvinyltransferase 1 (Streptococcus pneumoniae (strain ATCC BAA-255 / R6)).